The chain runs to 84 residues: Magnetosome protein MamR (84 aa).

It belongs to the magnetosome MamR family.

The protein resides in the magnetosome. In terms of biological role, may play a role in controlling magnetite number and size. Coexpression of mamLQRBIEMO in a deletion of the 17 gene mamAB operon restores magnetosome vesicle formation but not magnetite biosynthesis. The protein is Magnetosome protein MamR of Magnetospirillum gryphiswaldense (strain DSM 6361 / JCM 21280 / NBRC 15271 / MSR-1).